Here is a 653-residue protein sequence, read N- to C-terminus: 23S rRNA 5-hydroxycytidine C2501 synthase (653 aa).

It belongs to the peptidase U32 family. As to quaternary structure, interacts with precursors of the 50S ribosomal subunit.

Iron-sulfur clusters and prephenate are required for ho5C2501 formation. In terms of biological role, responsible for the formation of the 5-hydroxycytidine modification at the C2501 position (ho5C2501) of 23S rRNA. May be a Fe-S protein that catalyzes ho5C2501 formation using prephenate as a hydroxyl group donor. The sequence is that of 23S rRNA 5-hydroxycytidine C2501 synthase from Escherichia coli (strain K12).